A 688-amino-acid polypeptide reads, in one-letter code: Glycine--tRNA ligase beta subunit (688 aa).

This sequence belongs to the class-II aminoacyl-tRNA synthetase family. In terms of assembly, tetramer of two alpha and two beta subunits.

The protein resides in the cytoplasm. It catalyses the reaction tRNA(Gly) + glycine + ATP = glycyl-tRNA(Gly) + AMP + diphosphate. This is Glycine--tRNA ligase beta subunit from Syntrophomonas wolfei subsp. wolfei (strain DSM 2245B / Goettingen).